The following is a 372-amino-acid chain: MSNQHILLMSNLLPVGSNISTWWNFGSMLLTCLAMQTLTGFFLAIHYTANINLAFSSVIHITRDVPYGWTMQNLHAIGASMFFICIYIHIARGIYYGSYLNKEVWLSGITLLITLMATAFFGYVLPWGQMSFWAATVITNLLTAIPYLGTTLTTWLWGGFSINDPTLTRFFALHFILPFIIISLTSIHIILLHNEGSSNPPGTNSDIDKIPFHPYHSYKDMLMVTTMITLLFLILSFSPDLLNDPENFSKANPMITPQHIKPEWYFLFAYGILRSIPNKLGGTLALLMSIAILMTTPFTHTSYTRSMTFRPLTQILFWTLVATFITLTWTATKPVESPFIIISQMTSIFYFFFFIMNPILGWTENKIMMMND.

4 helical membrane passes run Phe-25 to Ile-45, Trp-69 to Ile-90, Trp-105 to Leu-125, and Phe-170 to Ile-190. Heme b is bound by residues His-75 and His-89. Residues His-174 and His-188 each contribute to the heme b site. His-193 contributes to the a ubiquinone binding site. 4 helical membrane-spanning segments follow: residues Tyr-218–Ser-238, Leu-280–His-300, Leu-312–Thr-332, and Phe-339–Pro-358.

It belongs to the cytochrome b family. As to quaternary structure, the cytochrome bc1 complex contains 3 respiratory subunits (MT-CYB, CYC1 and UQCRFS1), 2 core proteins (UQCRC1 and UQCRC2) and probably 6 low-molecular weight proteins. The cofactor is heme b.

The protein resides in the mitochondrion inner membrane. Its function is as follows. Component of the ubiquinol-cytochrome c reductase complex (complex III or cytochrome b-c1 complex) that is part of the mitochondrial respiratory chain. The b-c1 complex mediates electron transfer from ubiquinol to cytochrome c. Contributes to the generation of a proton gradient across the mitochondrial membrane that is then used for ATP synthesis. In Ophiophagus hannah (King cobra), this protein is Cytochrome b (MT-CYB).